A 240-amino-acid chain; its full sequence is Aquaporin SIP1-1 (240 aa).

2 consecutive transmembrane segments (helical) span residues 13 to 33 and 44 to 64; these read LMTF…AAII and APLV…TVIF. An NPA 1 motif is present at residues 70–72; the sequence is NPT. The next 3 membrane-spanning stretches (helical) occupy residues 89 to 109, 132 to 152, and 163 to 183; these read SLAI…LAIM, GAIA…LIIL, and FLLA…TGPA. An NPA 2 motif is present at residues 185–187; sequence NPA. The helical transmembrane segment at 203 to 223 threads the bilayer; sequence DHIYVYWISSFVGALSAALLF.

It belongs to the MIP/aquaporin (TC 1.A.8) family. SIP (TC 1.A.8.10) subfamily. Expressed in roots and above ground. Expressed in elongating regions of the root tips, trichome cells of the rosette leaves, vascular tissues of the flower petals, stigma, stamens (anthers and filaments), pollen and the top and bottom (receptacle) of siliques.

The protein resides in the endoplasmic reticulum membrane. Functionally, water channel required to facilitate the transport of water across cell membrane. The polypeptide is Aquaporin SIP1-1 (SIP1-1) (Arabidopsis thaliana (Mouse-ear cress)).